The following is a 137-amino-acid chain: Small ribosomal subunit protein uS12 (137 aa).

The interval 1–23 (MPTINQLVRKGRKSKSSKSDAPA) is disordered. Asp-102 is modified (3-methylthioaspartic acid).

It belongs to the universal ribosomal protein uS12 family. As to quaternary structure, part of the 30S ribosomal subunit. Contacts proteins S8 and S17. May interact with IF1 in the 30S initiation complex.

In terms of biological role, with S4 and S5 plays an important role in translational accuracy. Interacts with and stabilizes bases of the 16S rRNA that are involved in tRNA selection in the A site and with the mRNA backbone. Located at the interface of the 30S and 50S subunits, it traverses the body of the 30S subunit contacting proteins on the other side and probably holding the rRNA structure together. The combined cluster of proteins S8, S12 and S17 appears to hold together the shoulder and platform of the 30S subunit. The sequence is that of Small ribosomal subunit protein uS12 from Levilactobacillus brevis (strain ATCC 367 / BCRC 12310 / CIP 105137 / JCM 1170 / LMG 11437 / NCIMB 947 / NCTC 947) (Lactobacillus brevis).